The primary structure comprises 404 residues: Omega-3 fatty acid desaturase, chloroplastic (404 aa).

Positions Thr28–Ala50 are disordered. The Histidine box-1 signature appears at His121–His125. The short motif at His157–His161 is the Histidine box-2 element. The Histidine box-3 motif lies at His324–His328.

It belongs to the fatty acid desaturase type 1 family.

It is found in the plastid. The protein resides in the chloroplast membrane. It participates in lipid metabolism; polyunsaturated fatty acid biosynthesis. Chloroplast omega-3 fatty acid desaturase introduces the third double bond in the biosynthesis of 16:3 and 18:3 fatty acids, important constituents of plant membranes. It is thought to use ferredoxin as an electron donor and to act on fatty acids esterified to galactolipids, sulfolipids and phosphatidylglycerol. In Brassica napus (Rape), this protein is Omega-3 fatty acid desaturase, chloroplastic (FAD7).